Here is a 474-residue protein sequence, read N- to C-terminus: N-lysine methyltransferase SETD6 (474 aa).

At Ser14 the chain carries Phosphoserine. The SET domain maps to 63 to 287; the sequence is PKVLVSRQGT…KGHEIFNTYG (225 aa). N6-methylated lysine; by autocatalysis is present on Lys64. Position 74-76 (74-76) interacts with S-adenosyl-L-methionine; the sequence is AGY. Residue Trp123 coordinates substrate. Lys180 bears the N6-methylated lysine; by autocatalysis mark. Tyr224 contacts S-adenosyl-L-methionine. 2 residues coordinate substrate: Ser225 and Gln227. S-adenosyl-L-methionine-binding positions include 252-253 and Tyr298; that span reads NH. Lys373 is subject to N6-methylated lysine; by autocatalysis.

It belongs to the class V-like SAM-binding methyltransferase superfamily. Histone-lysine methyltransferase family. SETD6 subfamily. As to quaternary structure, monomer, homodimer and homotrimer; these structures are stabilized in the presence of S-adenosyl-L-methionine (SAM). In terms of processing, automethylated.

The protein resides in the nucleus. The catalysed reaction is L-lysyl-[protein] + S-adenosyl-L-methionine = N(6)-methyl-L-lysyl-[protein] + S-adenosyl-L-homocysteine + H(+). It catalyses the reaction L-lysyl(8)-[histone H2AZ] + S-adenosyl-L-methionine = N(6)-methyl-L-lysyl(8)-[histone H2AZ] + S-adenosyl-L-homocysteine + H(+). Its function is as follows. Protein-lysine N-methyltransferase. Monomethylates 'Lys-310' of the RELA subunit of NF-kappa-B complex, leading to down-regulation of NF-kappa-B transcription factor activity. Monomethylates 'Lys-8' of H2AZ (H2AZK8me1). Required for the maintenance of embryonic stem cell self-renewal. Methylates PAK4. This chain is N-lysine methyltransferase SETD6 (Setd6), found in Rattus norvegicus (Rat).